Reading from the N-terminus, the 326-residue chain is MPALSLIALLSLVSTAFARQWEVHPPQQQGRHWAQICSGNPFNRIRGCDRYGCGNYGASRQGKGEKHKGVDVICTDGSIVYAPFSGQLSGPIRFFHNGNAIDDGVQISGSGYCVKLVCIHPIRYHGQIQKGQQLGRMLPMQKVFPGIVSHIHVENCDQSDPTHLLRPIPDISPPFPQQDAHWAVVCAGNPTNEIRGCDKYGCGYFGAPRRNGKGEKHKGVDVICADGATVYAPFSGELSGPVKFFHNGNAIDDGVQIRGSGFCVKLLCIHPIRYNGRISKGQVLGRMLPMQRVFPGIISHIHVENCDRSDPTSNLERGKGESEMEV.

Positions 1–18 (MPALSLIALLSLVSTAFA) are cleaved as a signal peptide. Tandem repeats lie at residues 28-162 (QQGR…SDPT) and 177-312 (QQDA…SDPT). 3 disulfides stabilise this stretch: Cys37–Cys74, Cys48–Cys53, and Cys113–Cys156. His67, Asp71, and His152 together coordinate Zn(2+). The disordered stretch occupies residues 307–326 (DRSDPTSNLERGKGESEMEV).

This sequence belongs to the LECT2/MIM-1 family. Substrate for arginine-specific ADP-ribosyltransferase.

Its subcellular location is the cytoplasmic granule. The chain is Myeloid protein 1 (MIM1) from Gallus gallus (Chicken).